Consider the following 2448-residue polypeptide: Cysteine repeat modular protein 1 (2448 aa).

A helical membrane pass occupies residues 9–29 (TSTNLLNIFALYFSAICFIYC). Residues N48, N89, N248, N284, N461, N503, N542, N598, and N619 are each glycosylated (N-linked (GlcNAc...) asparagine). 4 FU repeats span residues 431–481 (KNTC…GYYF), 485–530 (FMQC…GFYI), 535–566 (NFKC…FYLS), and 567–611 (SNTC…GQFA). 10 FU repeats span residues 645–694 (NNQC…GYFP), 698–727 (TSVC…YYLQ), 728–772 (DSNC…GTFG), 775–813 (QNIC…ITNN), 819–868 (KGMC…YYLS), 904–947 (GRVC…GFPD), 950–983 (QNVC…LNPA), 984–1027 (NNIC…RTYP), 1063–1109 (QGAC…NQYV), and 1113–1144 (QNRC…GFYL). 2 N-linked (GlcNAc...) asparagine glycosylation sites follow: N761 and N812. A glycan (N-linked (GlcNAc...) asparagine) is linked at N934. Residue N1002 is glycosylated (N-linked (GlcNAc...) asparagine). N1146 is a glycosylation site (N-linked (GlcNAc...) asparagine). An FU 15 repeat occupies 1147–1193 (QTQCSICDISCLQCSGPGFDSCIQCAQGYYKLGDSVCVQSCPDGFFL). N-linked (GlcNAc...) asparagine glycosylation occurs at N1194. 5 FU repeats span residues 1197–1232 (NNQC…ISNQ), 1234–1279 (GIIC…GYRS), 1281–1332 (KGVC…GTFQ), 1346–1394 (SYYC…GFIL), and 1402–1436 (NQYC…GTVQ). N-linked (GlcNAc...) asparagine glycans are attached at residues N1296, N1328, and N1365. 4 N-linked (GlcNAc...) asparagine glycosylation sites follow: N1506, N1601, N1628, and N1670. The region spanning 1739 to 1773 (SDISCSLNLCMNSGKCVPNSIFCSCPSAFTGPKCQ) is the EGF-like domain. 3 cysteine pairs are disulfide-bonded: C1743-C1754, C1748-C1761, and C1763-C1772. N1800, N1849, N1877, N1942, N2117, N2155, and N2179 each carry an N-linked (GlcNAc...) asparagine glycan. The next 2 helical transmembrane spans lie at 2201–2221 (LYIM…YSAI) and 2238–2258 (IYFL…NQFV). An N-linked (GlcNAc...) asparagine glycan is attached at N2260. A run of 4 helical transmembrane segments spans residues 2267 to 2287 (SLTI…ILPF), 2296 to 2316 (ILTS…TIGV), 2352 to 2372 (MIGL…IGLC), and 2386 to 2406 (AVFL…IIVG).

Its subcellular location is the membrane. Required for mucocyst secretion. The sequence is that of Cysteine repeat modular protein 1 from Tetrahymena thermophila (strain SB210).